Consider the following 430-residue polypeptide: Serine--tRNA ligase (430 aa).

Thr-235 to Glu-237 contacts L-serine. Arg-266 to Glu-268 provides a ligand contact to ATP. Glu-289 contributes to the L-serine binding site. Residue Glu-353–Ser-356 coordinates ATP. Position 388 (Ser-388) interacts with L-serine.

It belongs to the class-II aminoacyl-tRNA synthetase family. Type-1 seryl-tRNA synthetase subfamily. Homodimer. The tRNA molecule binds across the dimer.

The protein resides in the cytoplasm. The enzyme catalyses tRNA(Ser) + L-serine + ATP = L-seryl-tRNA(Ser) + AMP + diphosphate + H(+). It catalyses the reaction tRNA(Sec) + L-serine + ATP = L-seryl-tRNA(Sec) + AMP + diphosphate + H(+). It participates in aminoacyl-tRNA biosynthesis; selenocysteinyl-tRNA(Sec) biosynthesis; L-seryl-tRNA(Sec) from L-serine and tRNA(Sec): step 1/1. In terms of biological role, catalyzes the attachment of serine to tRNA(Ser). Is also able to aminoacylate tRNA(Sec) with serine, to form the misacylated tRNA L-seryl-tRNA(Sec), which will be further converted into selenocysteinyl-tRNA(Sec). The sequence is that of Serine--tRNA ligase from Azoarcus sp. (strain BH72).